Consider the following 102-residue polypeptide: Auxin-responsive protein SAUR68 (102 aa).

Belongs to the ARG7 family.

The protein localises to the cell membrane. Functionally, may promote auxin-stimulated organ elongation, such as hypocotyls, stamen filaments and petals. In Arabidopsis thaliana (Mouse-ear cress), this protein is Auxin-responsive protein SAUR68.